A 329-amino-acid chain; its full sequence is MDPTTPAWGTESTTMNGNDQALPLFCGKETLISVFLILFIALVGLVGNGFVLWLLGFRMRKNAFSVYVLSLAGADFLFLCFQIINCLVYLSNVFCSISINFPSFFITVMTCAYLAGLSMLSTISTERCLSVLWPIWYRCRRPRHLSAVACVLLWALSLLLSILEGKFCGLFGDGDSGWCQTFDLITAAWLIFLFMVLCGSSLALLVRILCGSRGLPLTRLYLTILLTVLVFLLCGLPFGIQWFLILWIWKNSDVLFCHIHPVSVVLSSLNSSANPIIYFFVGSFRKQWRLQQPILKLALQRALQDIAEVDHSEGCFRQGTPEMSRSSLV.

At 1–33 the chain is on the extracellular side; sequence MDPTTPAWGTESTTMNGNDQALPLFCGKETLIS. A helical membrane pass occupies residues 34 to 54; it reads VFLILFIALVGLVGNGFVLWL. The Cytoplasmic portion of the chain corresponds to 55-63; it reads LGFRMRKNA. The helical transmembrane segment at 64 to 84 threads the bilayer; that stretch reads FSVYVLSLAGADFLFLCFQII. Residues 85–96 are Extracellular-facing; the sequence is NCLVYLSNVFCS. Residues 97-117 traverse the membrane as a helical segment; it reads ISINFPSFFITVMTCAYLAGL. The Cytoplasmic portion of the chain corresponds to 118–144; the sequence is SMLSTISTERCLSVLWPIWYRCRRPRH. The helical transmembrane segment at 145–165 threads the bilayer; the sequence is LSAVACVLLWALSLLLSILEG. At 166 to 183 the chain is on the extracellular side; that stretch reads KFCGLFGDGDSGWCQTFD. The helical transmembrane segment at 184-204 threads the bilayer; that stretch reads LITAAWLIFLFMVLCGSSLAL. The Cytoplasmic segment spans residues 205–227; that stretch reads LVRILCGSRGLPLTRLYLTILLT. A helical membrane pass occupies residues 228 to 248; the sequence is VLVFLLCGLPFGIQWFLILWI. The Extracellular segment spans residues 249–263; sequence WKNSDVLFCHIHPVS. The chain crosses the membrane as a helical span at residues 264–284; sequence VVLSSLNSSANPIIYFFVGSF. Residues 285–329 are Cytoplasmic-facing; that stretch reads RKQWRLQQPILKLALQRALQDIAEVDHSEGCFRQGTPEMSRSSLV.

Belongs to the G-protein coupled receptor 1 family. Mas subfamily.

It localises to the cell membrane. Mast cell-specific receptor for basic secretagogues, i.e. cationic amphiphilic drugs, as well as endo- or exogenous peptides, consisting of a basic head group and a hydrophobic core. Recognizes and binds small molecules containing a cyclized tetrahydroisoquinoline (THIQ), such as non-steroidal neuromuscular blocking drugs (NMBDs), including tubocurarine and atracurium. In response to these compounds, mediates pseudo-allergic reactions characterized by histamine release, inflammation and airway contraction. The sequence is that of Mas-related G-protein coupled receptor member X2 (MRGPRX2) from Pan troglodytes (Chimpanzee).